Here is a 326-residue protein sequence, read N- to C-terminus: MANLRELRDRIRSVNSTKKITKAQELIATSRITKAQGRVAAAAPYAEEIQKVLERLASASSLDHPMLREREGGKRAAVLVVSSDRGMAGGYNHNVFKKAAELEKLLAEQGYEVVRYVTGSKGVGYYKFREDYVAGAWTGFSQDPDWNATHDVRRHLIDGFTATSDGTAKWRDGLNVAEGQEIQGFDQVHVVYTEFVSMLTQKPVVHQLLPVEPVIEDDIFERGESALSDGKNEIEPDYEFEPDADTLLEALLPQYISRRLFSIFLEAAAAESASRRNAMKSATDNATELVKDLSRVANAARQAQITQEITEIVGGAGALSGSGESD.

It belongs to the ATPase gamma chain family. In terms of assembly, F-type ATPases have 2 components, CF(1) - the catalytic core - and CF(0) - the membrane proton channel. CF(1) has five subunits: alpha(3), beta(3), gamma(1), delta(1), epsilon(1). CF(0) has three main subunits: a, b and c.

It localises to the cell membrane. In terms of biological role, produces ATP from ADP in the presence of a proton gradient across the membrane. The gamma chain is believed to be important in regulating ATPase activity and the flow of protons through the CF(0) complex. This Corynebacterium efficiens (strain DSM 44549 / YS-314 / AJ 12310 / JCM 11189 / NBRC 100395) protein is ATP synthase gamma chain.